The primary structure comprises 328 residues: Nickel import system permease protein NikB (328 aa).

Transmembrane regions (helical) follow at residues 11–31 (LMQM…LMKL), 104–124 (LLIS…LGII), 139–159 (VIST…LLFI), 170–190 (ILSQ…AYII), 229–249 (ILPI…GTVV), and 279–299 (VLFI…LTLL). The region spanning 100–297 (APITLLISFS…IINTIADLLT (198 aa)) is the ABC transmembrane type-1 domain.

Belongs to the binding-protein-dependent transport system permease family. OppBC subfamily. In terms of assembly, the complex is composed of two ATP-binding proteins (NikD and NikE), two transmembrane proteins (NikB and NikC) and a solute-binding protein (NikA).

It localises to the cell membrane. Its function is as follows. Part of the ABC transporter complex NikABCDE (Opp2) involved in nickel import. Probably responsible for the translocation of the substrate across the membrane. The sequence is that of Nickel import system permease protein NikB from Staphylococcus aureus (strain USA300).